Reading from the N-terminus, the 1826-residue chain is Transcription initiation factor TFIID subunit 1-like (1826 aa).

Disordered regions lie at residues 118–141, 532–555, and 1252–1276; these read DESQRHQQTMGSLQPLYHSDYDED, IPDEKEEATSNSPSKESKKESSLK, and RLKRNQEKEKLKGPPEKKPKKMKER. Over residues 1252–1268 the composition is skewed to basic and acidic residues; that stretch reads RLKRNQEKEKLKGPPEK. The short motif at 1370 to 1377 is the Nuclear localization signal element; it reads PPKKKRRV. 2 Bromo domains span residues 1395–1503 and 1517–1626; these read RRRT…LKEK and LLDD…ITEY. The disordered stretch occupies residues 1648 to 1826; it reads AELESLDPMT…SGEHKDGHGK (179 aa). The segment covering 1660-1700 has biased composition (polar residues); the sequence is PYTSQPPDMYDTNTSLSTSRDASVFQDESNLSVLDISTATP. 3 stretches are compositionally biased toward acidic residues: residues 1714-1729, 1740-1750, and 1768-1783; these read EDSDVDVEGYDDEEED, GDGDLADEEEG, and EGEDDEEDAGSDEEGD. The span at 1787-1797 shows a compositional bias: polar residues; it reads SAIQLSESGSD. Residues 1817–1826 are compositionally biased toward basic and acidic residues; sequence SGEHKDGHGK.

This sequence belongs to the TAF1 family. In terms of assembly, can bind directly to TATA-box binding protein (TBP). Interacts (via bromo domains) with acetylated lysine residues on the N-terminus of histone H1.4, H2A, H2B, H3 and H4 (in vitro). In terms of tissue distribution, testis specific, expressed apparently in germ cells.

The protein localises to the nucleus. Functionally, may act as a functional substitute for TAF1/TAFII250 during male meiosis, when sex chromosomes are transcriptionally silenced. This is Transcription initiation factor TFIID subunit 1-like (TAF1L) from Homo sapiens (Human).